A 195-amino-acid polypeptide reads, in one-letter code: Imidazoleglycerol-phosphate dehydratase (195 aa).

Belongs to the imidazoleglycerol-phosphate dehydratase family.

It is found in the cytoplasm. It catalyses the reaction D-erythro-1-(imidazol-4-yl)glycerol 3-phosphate = 3-(imidazol-4-yl)-2-oxopropyl phosphate + H2O. Its pathway is amino-acid biosynthesis; L-histidine biosynthesis; L-histidine from 5-phospho-alpha-D-ribose 1-diphosphate: step 6/9. This is Imidazoleglycerol-phosphate dehydratase from Polynucleobacter necessarius subsp. necessarius (strain STIR1).